The primary structure comprises 289 residues: Glycine--tRNA ligase alpha subunit (289 aa).

This sequence belongs to the class-II aminoacyl-tRNA synthetase family. Tetramer of two alpha and two beta subunits.

Its subcellular location is the cytoplasm. The catalysed reaction is tRNA(Gly) + glycine + ATP = glycyl-tRNA(Gly) + AMP + diphosphate. This chain is Glycine--tRNA ligase alpha subunit, found in Nitratidesulfovibrio vulgaris (strain ATCC 29579 / DSM 644 / CCUG 34227 / NCIMB 8303 / VKM B-1760 / Hildenborough) (Desulfovibrio vulgaris).